The sequence spans 530 residues: B3 domain-containing protein REM-like 3 (530 aa).

DNA-binding regions (TF-B3) lie at residues 11–103 and 144–241; these read KPHF…FGLS and DFVV…FPLE. The tract at residues 251–276 is disordered; sequence SKKVKQEVEHEESVKEETNVESGKLK. Residues 254–276 show a composition bias toward basic and acidic residues; sequence VKQEVEHEESVKEETNVESGKLK. DNA-binding regions (TF-B3) lie at residues 296–393 and 431–530; these read NFVV…FPLE and SFVV…WDKK.

Its subcellular location is the nucleus. This Arabidopsis thaliana (Mouse-ear cress) protein is B3 domain-containing protein REM-like 3.